A 95-amino-acid polypeptide reads, in one-letter code: Large ribosomal subunit protein uL23 (95 aa).

This sequence belongs to the universal ribosomal protein uL23 family. In terms of assembly, part of the 50S ribosomal subunit. Contacts protein L29, and trigger factor when it is bound to the ribosome.

One of the early assembly proteins it binds 23S rRNA. One of the proteins that surrounds the polypeptide exit tunnel on the outside of the ribosome. Forms the main docking site for trigger factor binding to the ribosome. The protein is Large ribosomal subunit protein uL23 of Desulfitobacterium hafniense (strain Y51).